The following is a 407-amino-acid chain: uncharacterized protein (407 aa).

An N-terminal signal peptide occupies residues 1 to 27; it reads MRILAMTRAHNAGRTLAATLDSLAVFS.

This is an uncharacterized protein from Mycobacterium bovis (strain ATCC BAA-935 / AF2122/97).